We begin with the raw amino-acid sequence, 141 residues long: MERLQGLLLWLLLSPSVVWASRGPLRPLCRPVNATLAAENEFCPVCITFTTSICAGYCPSMVRVLPAALPPVPQPVCTYRELRFASVRLPGCPPGVDPIVSFPVALSCRCGPCRLSSSDCGGPRTQPMTCDLPHLPGLLLF.

The signal sequence occupies residues M1–A20. 6 disulfide bridges follow: C29/C77, C43/C92, C46/C130, C54/C108, C58/C110, and C113/C120. N33 is a glycosylation site (N-linked (GlcNAc...) asparagine).

The protein belongs to the glycoprotein hormones subunit beta family. In terms of assembly, heterodimer of a common alpha chain and a unique beta chain which confers biological specificity to thyrotropin, lutropin, follitropin and gonadotropin.

The protein localises to the secreted. Its function is as follows. Promotes spermatogenesis and ovulation by stimulating the testes and ovaries to synthesize steroids. The sequence is that of Lutropin subunit beta (Lhb) from Rattus norvegicus (Rat).